A 373-amino-acid polypeptide reads, in one-letter code: Velvet complex subunit RYP3 (373 aa).

Positions 1 to 10 (MYTLKQDRPH) are enriched in basic and acidic residues. 2 disordered regions span residues 1 to 26 (MYTL…LQHG) and 344 to 373 (RKDG…ENEG). The Velvet domain occupies 48–344 (VYEGRIYSLD…AFQGIKIPIR (297 aa)). Positions 364–373 (GEGEDWENEG) are enriched in acidic residues.

Belongs to the velvet family. VelB subfamily. In terms of assembly, component of the heterotrimeric velvet complex composed of LAE1, VEL1 and VEL2; VEL1A acting as a bridging protein between LAE1 and VEL2. Forms a heterodimeric complex with VOS1; the formation of the VEL2-VOS1 complex is light-dependent.

The protein localises to the nucleus. The protein resides in the cytoplasm. In terms of biological role, component of the velvet transcription factor complex that controls sexual/asexual developmental ratio in response to light, promoting sexual development in the darkness while stimulating asexual sporulation under illumination. The velvet complex acts as a global regulator for secondary metabolite gene expression. Component of the RYP2-RYP3 heterodimeric complex that plays a dual role in activating genes associated with spore maturation and repressing certain development-associated genes. The complex binds DNA through the DNA-binding domain of RYP2 that recognizes an 11-nucleotide consensus sequence 5'-CTGGCCGCGGC-3' consisting of two motifs in the promoters of key developmental regulatory genes. Required for viable spore production and regulation of sporulation in response to temperature, as well as for the switch to yeast-form in the presence of host cells. The chain is Velvet complex subunit RYP3 (RYP3) from Ajellomyces capsulatus (Darling's disease fungus).